Here is a 142-residue protein sequence, read N- to C-terminus: Relaxin-3 (142 aa).

The N-terminal stretch at 1-25 is a signal peptide; the sequence is MARYKLLLLLAVWVLTGELWPGAEA. 3 disulfides stabilise this stretch: cysteine 35–cysteine 129, cysteine 47–cysteine 142, and cysteine 128–cysteine 133. The propeptide at 55–118 is connecting peptide; that stretch reads SDILAHEAMG…GTPGALRGSR (64 aa).

This sequence belongs to the insulin family. Heterodimer of a B chain and an A chain linked by two disulfide bonds.

It is found in the secreted. Its function is as follows. May play a role in neuropeptide signaling processes. Ligand for LGR7, RXFP3 and RXFP4. The chain is Relaxin-3 (RLN3) from Pan troglodytes (Chimpanzee).